The chain runs to 336 residues: GTPase Obg (336 aa).

The Obg domain occupies 1–159; it reads MKFLDETKVY…KTIWLRLKLI (159 aa). Residues 160–327 form the OBG-type G domain; it reads ADAGLVGLPN…ALRALRSVIA (168 aa). GTP contacts are provided by residues 166 to 173, 191 to 195, 212 to 215, 279 to 282, and 308 to 310; these read GLPNAGKS, FTTLH, DIPG, SQID, and SAV. Residues S173 and T193 each coordinate Mg(2+).

It belongs to the TRAFAC class OBG-HflX-like GTPase superfamily. OBG GTPase family. Monomer. Requires Mg(2+) as cofactor.

The protein resides in the cytoplasm. An essential GTPase which binds GTP, GDP and possibly (p)ppGpp with moderate affinity, with high nucleotide exchange rates and a fairly low GTP hydrolysis rate. Plays a role in control of the cell cycle, stress response, ribosome biogenesis and in those bacteria that undergo differentiation, in morphogenesis control. The polypeptide is GTPase Obg (Rhizobium meliloti (strain 1021) (Ensifer meliloti)).